A 735-amino-acid polypeptide reads, in one-letter code: Glutamine-dependent NAD(+) synthetase (735 aa).

The 271-residue stretch at 4 to 274 (LRVATCNLNQ…VEVLDALVDL (271 aa)) folds into the CN hydrolase domain. Glu44 acts as the Proton acceptor; for glutaminase activity in catalysis. Lys113 functions as the For glutaminase activity in the catalytic mechanism. The active-site Nucleophile; for glutaminase activity is the Cys174. Residues 324–711 (YHRPEEEIAF…STEGELRRRK (388 aa)) are ligase. 354–361 (PLSGGADS) contacts ATP. Ser356 is an active-site residue.

This sequence in the C-terminal section; belongs to the NAD synthetase family.

It carries out the reaction deamido-NAD(+) + L-glutamine + ATP + H2O = L-glutamate + AMP + diphosphate + NAD(+) + H(+). It functions in the pathway cofactor biosynthesis; NAD(+) biosynthesis; NAD(+) from deamido-NAD(+) (L-Gln route): step 1/1. The sequence is that of Glutamine-dependent NAD(+) synthetase from Oryza sativa subsp. indica (Rice).